The primary structure comprises 582 residues: La-related protein 7 (582 aa).

An N-acetylmethionine modification is found at Met-1. Residues Met-1–Lys-27 are disordered. Positions Lys-10–Lys-25 are enriched in basic and acidic residues. Positions Arg-28–Glu-122 constitute an HTH La-type RNA-binding domain. Residues Arg-125 to Thr-203 form the RRM domain. Disordered stretches follow at residues Asn-188–Lys-368 and Lys-410–Glu-442. The span at Lys-219–Met-228 shows a compositional bias: basic residues. A compositionally biased stretch (basic and acidic residues) spans Lys-229–Asn-240. Residue Lys-237 forms a Glycyl lysine isopeptide (Lys-Gly) (interchain with G-Cter in SUMO2) linkage. Residue Thr-257 is modified to Phosphothreonine. Phosphoserine occurs at positions 258, 261, 273, 298, 299, and 300. Positions Ile-316–Glu-335 are enriched in basic and acidic residues. A Phosphoserine modification is found at Ser-337. A Phosphothreonine modification is found at Thr-338. Phosphoserine is present on Ser-351. The span at Lys-354–His-367 shows a compositional bias: basic residues. Lys-410 participates in a covalent cross-link: Glycyl lysine isopeptide (Lys-Gly) (interchain with G-Cter in SUMO2). Basic and acidic residues predominate over residues Lys-428–Glu-442. The 114-residue stretch at Gln-450–Lys-563 folds into the xRRM domain.

This sequence belongs to the LARP7 family. As to quaternary structure, core component of the 7SK RNP complex, at least composed of 7SK RNA, LARP7, MEPCE, HEXIM1 (or HEXIM2) and P-TEFb (composed of CDK9 and CCNT1/cyclin-T1). Interacts with METTL16. Interacts with RBM7; upon genotoxic stress this interaction is enhanced, triggering the release of inactive P-TEFb complex from the core, yielding to P-TEFb complex activation. Associates with box C/D small nucleolar ribonucleoprotein (snoRNP) complexes.

It localises to the nucleus. Its subcellular location is the nucleoplasm. RNA-binding protein that specifically binds distinct small nuclear RNA (snRNAs) and regulates their processing and function. Specifically binds the 7SK snRNA (7SK RNA) and acts as a core component of the 7SK ribonucleoprotein (RNP) complex, thereby acting as a negative regulator of transcription elongation by RNA polymerase II. The 7SK RNP complex sequesters the positive transcription elongation factor b (P-TEFb) in a large inactive 7SK RNP complex preventing RNA polymerase II phosphorylation and subsequent transcriptional elongation. The 7SK RNP complex also promotes snRNA gene transcription by RNA polymerase II via interaction with the little elongation complex (LEC). LARP7 specifically binds to the highly conserved 3'-terminal U-rich stretch of 7SK RNA; on stimulation, remains associated with 7SK RNA, whereas P-TEFb is released from the complex. LARP7 also acts as a regulator of mRNA splicing fidelity by promoting U6 snRNA processing. Specifically binds U6 snRNAs and associates with a subset of box C/D RNP complexes: promotes U6 snRNA 2'-O-methylation by facilitating U6 snRNA loading into box C/D RNP complexes. U6 snRNA 2'-O-methylation is required for mRNA splicing fidelity. Binds U6 snRNAs with a 5'-CAGGG-3' sequence motif. U6 snRNA processing is required for spermatogenesis. In Homo sapiens (Human), this protein is La-related protein 7.